We begin with the raw amino-acid sequence, 430 residues long: Adenylosuccinate synthetase (430 aa).

Residues 12 to 18 (GDEGKGK) and 40 to 42 (GHT) contribute to the GTP site. Asp13 serves as the catalytic Proton acceptor. 2 residues coordinate Mg(2+): Asp13 and Gly40. Residues 13 to 16 (DEGK), 38 to 41 (NAGH), Thr128, Arg142, Gln223, Thr238, and Arg302 contribute to the IMP site. The Proton donor role is filled by His41. Residue 298–304 (TTTGRPR) participates in substrate binding. GTP contacts are provided by residues Arg304, 330-332 (SID), and 412-414 (SVG).

It belongs to the adenylosuccinate synthetase family. As to quaternary structure, homodimer. It depends on Mg(2+) as a cofactor.

Its subcellular location is the cytoplasm. The enzyme catalyses IMP + L-aspartate + GTP = N(6)-(1,2-dicarboxyethyl)-AMP + GDP + phosphate + 2 H(+). Its pathway is purine metabolism; AMP biosynthesis via de novo pathway; AMP from IMP: step 1/2. In terms of biological role, plays an important role in the de novo pathway of purine nucleotide biosynthesis. Catalyzes the first committed step in the biosynthesis of AMP from IMP. The polypeptide is Adenylosuccinate synthetase (Streptococcus pyogenes serotype M5 (strain Manfredo)).